The following is an 802-amino-acid chain: Oleate activated transcription factor 3 (802 aa).

A DNA-binding region (zn(2)-C6 fungal-type) is located at residues 19 to 47 (CTNCKKRKSKCDRGKPCSNCTRIGIENSC). Polar residues predominate over residues 749–768 (TSQQDSLASAGTNRTNNIAT). The segment at 749–779 (TSQQDSLASAGTNRTNNIATNSGSGDDGGNG) is disordered.

The protein belongs to the OAF3 family.

Its subcellular location is the cytoplasm. The protein localises to the nucleus. It localises to the mitochondrion. In terms of biological role, transcriptional inhibitor with a significantly increased number of target genes in response to oleate. This Vanderwaltozyma polyspora (strain ATCC 22028 / DSM 70294 / BCRC 21397 / CBS 2163 / NBRC 10782 / NRRL Y-8283 / UCD 57-17) (Kluyveromyces polysporus) protein is Oleate activated transcription factor 3 (OAF3).